We begin with the raw amino-acid sequence, 383 residues long: Acetylornithine deacetylase (383 aa).

Histidine 80 lines the Zn(2+) pocket. The active site involves aspartate 82. Residue aspartate 112 participates in Zn(2+) binding. Residue glutamate 144 is part of the active site. The Zn(2+) site is built by glutamate 145, glutamate 169, and histidine 355.

It belongs to the peptidase M20A family. ArgE subfamily. As to quaternary structure, homodimer. The cofactor is Zn(2+). Requires Co(2+) as cofactor. It depends on glutathione as a cofactor.

It is found in the cytoplasm. It catalyses the reaction N(2)-acetyl-L-ornithine + H2O = L-ornithine + acetate. The protein operates within amino-acid biosynthesis; L-arginine biosynthesis; L-ornithine from N(2)-acetyl-L-ornithine (linear): step 1/1. Its function is as follows. Catalyzes the hydrolysis of the amide bond of N(2)-acetylated L-amino acids. Cleaves the acetyl group from N-acetyl-L-ornithine to form L-ornithine, an intermediate in L-arginine biosynthesis pathway, and a branchpoint in the synthesis of polyamines. This is Acetylornithine deacetylase from Shigella flexneri.